The sequence spans 242 residues: Purine nucleoside phosphorylase SCO2081 (242 aa).

Zn(2+)-binding residues include H68, C106, and H123.

Belongs to the purine nucleoside phosphorylase YfiH/LACC1 family. As to quaternary structure, homodimer. It depends on Cu(2+) as a cofactor. The cofactor is Zn(2+).

It carries out the reaction adenosine + phosphate = alpha-D-ribose 1-phosphate + adenine. The catalysed reaction is S-methyl-5'-thioadenosine + phosphate = 5-(methylsulfanyl)-alpha-D-ribose 1-phosphate + adenine. It catalyses the reaction inosine + phosphate = alpha-D-ribose 1-phosphate + hypoxanthine. The enzyme catalyses adenosine + H2O + H(+) = inosine + NH4(+). In terms of biological role, purine nucleoside enzyme that catalyzes the phosphorolysis of adenosine and inosine nucleosides, yielding D-ribose 1-phosphate and the respective free bases, adenine and hypoxanthine. Also catalyzes the phosphorolysis of S-methyl-5'-thioadenosine into adenine and S-methyl-5-thio-alpha-D-ribose 1-phosphate. Also has adenosine deaminase activity. The polypeptide is Purine nucleoside phosphorylase SCO2081 (Streptomyces coelicolor (strain ATCC BAA-471 / A3(2) / M145)).